A 255-amino-acid polypeptide reads, in one-letter code: Tachylectin-2 (255 aa).

The N-terminal stretch at 1–19 (MKFLLVVLGFIGFLKDGIT) is a signal peptide. WD repeat units lie at residues 20–67 (VGGE…FLFL), 68–114 (SPGG…FLFF), 115–161 (DPNG…FLFF), 162–208 (HPNG…FLFF), and 209–255 (SSVG…FLFF).

In terms of assembly, monomer.

The protein localises to the secreted. It is found in the cytoplasmic granule. In terms of biological role, lectin that binds specifically to N-acetylglucosamine and N-acetylgalactosamine. Is part of the innate immunity host defense system of the horseshoe crab. This Tachypleus tridentatus (Japanese horseshoe crab) protein is Tachylectin-2.